The following is a 327-amino-acid chain: Aspartate--ammonia ligase (327 aa).

It belongs to the class-II aminoacyl-tRNA synthetase family. AsnA subfamily.

The protein localises to the cytoplasm. The enzyme catalyses L-aspartate + NH4(+) + ATP = L-asparagine + AMP + diphosphate + H(+). The protein operates within amino-acid biosynthesis; L-asparagine biosynthesis; L-asparagine from L-aspartate (ammonia route): step 1/1. In Bacillus cereus (strain AH820), this protein is Aspartate--ammonia ligase.